A 1666-amino-acid chain; its full sequence is Latent-transforming growth factor beta-binding protein 4 (1666 aa).

Positions 1–24 (MRRPGLGGPCPLLLLLLLPAATSA) are cleaved as a signal peptide. The EGF-like 1 domain maps to 148–180 (ARVLCPLICHNGGVCVKPDRCLCPPDFAGKFCQ). 6 disulfides stabilise this stretch: cysteine 152–cysteine 162, cysteine 156–cysteine 168, cysteine 170–cysteine 179, cysteine 288–cysteine 310, cysteine 297–cysteine 323, and cysteine 311–cysteine 326. A TB 1 domain is found at 286 to 338 (GYCFRELRGSECASPLPGLRTQEVCCRGEGLAWGVHDCHPCAEHLRNSNQVSG). Asparagine 351 is a glycosylation site (N-linked (GlcNAc...) asparagine). In terms of domain architecture, EGF-like 2; calcium-binding spans 356–396 (DVDECATGGRCQHGECANTRGGYTCVCPDGFLLDSSRSSCI). 7 disulfides stabilise this stretch: cysteine 360–cysteine 371, cysteine 366–cysteine 380, cysteine 382–cysteine 395, cysteine 408–cysteine 430, cysteine 417–cysteine 443, cysteine 431–cysteine 446, and cysteine 432–cysteine 458. In terms of domain architecture, TB 2 spans 406-458 (GPCYRVLHDGGCSLPILRNITKQICCCSRVGKAWGRGCQLCPPYGSEGFREIC). A glycan (N-linked (GlcNAc...) asparagine) is linked at asparagine 424. The tract at residues 473–590 (YNTRPLNQDP…EIPESGPSSS (118 aa)) is disordered. Pro residues predominate over residues 491–502 (RVPPATPRPPTG). The span at 521–561 (PRPRPEPRPRPESRPRPEPRPRPEPRPQPESQPRPESRPRP) shows a compositional bias: basic and acidic residues. Over residues 562–573 (ESQPWPEFPLPS) the composition is skewed to pro residues. The span at 579 to 590 (GPEIPESGPSSS) shows a compositional bias: low complexity. In terms of domain architecture, EGF-like 3 spans 588-629 (SSSMCQRNPQVCGPGRCVPRPSGYTCACDPGFRLGPQGTRCI). Cystine bridges form between cysteine 592/cysteine 604, cysteine 599/cysteine 613, cysteine 615/cysteine 628, cysteine 634/cysteine 646, cysteine 641/cysteine 655, cysteine 657/cysteine 670, cysteine 676/cysteine 688, cysteine 683/cysteine 697, cysteine 699/cysteine 712, cysteine 718/cysteine 730, cysteine 725/cysteine 739, cysteine 741/cysteine 750, cysteine 757/cysteine 769, cysteine 764/cysteine 778, cysteine 780/cysteine 793, cysteine 799/cysteine 811, cysteine 806/cysteine 820, cysteine 822/cysteine 835, cysteine 881/cysteine 893, cysteine 887/cysteine 902, cysteine 904/cysteine 918, cysteine 924/cysteine 936, cysteine 930/cysteine 945, cysteine 947/cysteine 960, cysteine 966/cysteine 977, cysteine 972/cysteine 986, cysteine 988/cysteine 1001, cysteine 1095/cysteine 1107, cysteine 1101/cysteine 1116, and cysteine 1118/cysteine 1131. Positions 630-671 (DIDECRRVPTPCAPGRCENTPGSFRCVCGTGFQAGPRATECL) constitute an EGF-like 4; calcium-binding domain. The EGF-like 5; calcium-binding domain maps to 672 to 713 (DVDECRRVPPPCDRGRCENTPGSFLCVCPAGYQAAPHGASCQ). The EGF-like 6; calcium-binding domain maps to 714–751 (DVDECTQSPGLCGRGVCENLPGSFRCVCPAGFRGSACE). An EGF-like 7; calcium-binding domain is found at 753–794 (DVDECAQQPPPCGPGRCDNTAGSFHCACPAGFRSRGPGAPCQ). The EGF-like 8; calcium-binding domain occupies 795-836 (DVDECSRSPSPCAYGRCENTEGSFKCVCPTGFQPNAAGSECE). An EGF-like 9; calcium-binding domain is found at 877-919 (DVDECSSGTPCGLHGQCTNTKGSFHCSCSTGYRAPSGQPGPCA). The region spanning 920–961 (DINECLEGDFCFPHGECLNTDGSFTCTCAPGYRPGPRGASCL) is the EGF-like 10; calcium-binding domain. In terms of domain architecture, EGF-like 11; calcium-binding spans 962 to 1002 (DVDECSEEDLCQSGICTNTDGSFECICPPGHRAGPDLASCL). The region spanning 1091 to 1132 (DVDECRNRSFCGAHAMCQNLPGSFQCVCDQGYEGARDGRHCV) is the EGF-like 12; calcium-binding domain. An N-linked (GlcNAc...) asparagine glycan is attached at asparagine 1097. The tract at residues 1171-1221 (TGRCVPPRAPAGTFPGSQPQAPASPSLPARPPAPPPPRRPSPPRQGPVSSG) is disordered. Residues 1185 to 1197 (PGSQPQAPASPSL) show a composition bias toward low complexity. Over residues 1198–1215 (PARPPAPPPPRRPSPPRQ) the composition is skewed to pro residues. The region spanning 1223–1277 (RECYFDTAAPDACDNILARNVTWQECCCTVGEGWGSGCRIQQCPGTETAEYQSLC) is the TB 3 domain. Intrachain disulfides connect cysteine 1225/cysteine 1248, cysteine 1235/cysteine 1260, cysteine 1249/cysteine 1265, cysteine 1250/cysteine 1277, cysteine 1299/cysteine 1312, cysteine 1307/cysteine 1321, cysteine 1323/cysteine 1336, cysteine 1342/cysteine 1354, cysteine 1349/cysteine 1363, and cysteine 1365/cysteine 1378. Residue asparagine 1242 is glycosylated (N-linked (GlcNAc...) asparagine). One can recognise an EGF-like 13; calcium-binding domain in the interval 1295–1337 (DVDECQLFQDQVCKSGVCVNTAPGYSCYCSNGFYYHAHRLECV). The EGF-like 14; calcium-binding domain maps to 1338-1379 (DNDECADEEPACEGGRCVNTVGSYHCTCEPPLVLDGSRRRCV). An N-linked (GlcNAc...) asparagine glycan is attached at asparagine 1381. The region spanning 1391-1444 (GVCWQEVGPDLVCSRPRLDRQATYTECCCLYGEAWGMDCALCPAQDSDDFEALC) is the TB 4 domain. Disulfide bonds link cysteine 1393-cysteine 1417, cysteine 1403-cysteine 1429, cysteine 1418-cysteine 1432, and cysteine 1419-cysteine 1444. The segment covering 1488-1500 (VLPYDPYPPPPGP) has biased composition (pro residues). A disordered region spans residues 1488 to 1566 (VLPYDPYPPP…SSERGSYTGA (79 aa)). Residue threonine 1564 is modified to Phosphothreonine. EGF-like domains follow at residues 1575–1615 (EAEE…MSCV) and 1616–1660 (DVNE…HHCA). 6 disulfide bridges follow: cysteine 1579-cysteine 1590, cysteine 1585-cysteine 1599, cysteine 1601-cysteine 1614, cysteine 1620-cysteine 1635, cysteine 1630-cysteine 1644, and cysteine 1646-cysteine 1659.

This sequence belongs to the LTBP family. Forms part of the large latent transforming growth factor beta precursor complex; removal is essential for activation of complex. Interacts with LTBP1 and TGFB1. Interacts with EFEMP2; this interaction promotes fibrillar deposition of EFEMP2. Contains hydroxylated asparagine residues.

The protein localises to the secreted. Its subcellular location is the extracellular space. It localises to the extracellular matrix. Key regulator of transforming growth factor beta (TGFB1, TGFB2 and TGFB3) that controls TGF-beta activation by maintaining it in a latent state during storage in extracellular space. Associates specifically via disulfide bonds with the Latency-associated peptide (LAP), which is the regulatory chain of TGF-beta, and regulates integrin-dependent activation of TGF-beta. This Mus musculus (Mouse) protein is Latent-transforming growth factor beta-binding protein 4 (Ltbp4).